Here is a 457-residue protein sequence, read N- to C-terminus: MYNCAIILAAGKGKRMKSSMPKVVHKVCGKEMVNHVIDNVRKANIKDVNLVIGKGSKTVKEHTKDRNLTYSMQEEQLGTGHAVICAEEFLKDKKGTVAIFTGDAPLITNETIQQLFEFHNSGKYAATLISSTVQDPTGYGRIIREASGEVKKIVEHKDCNEEELKVNEINSGMYCFDIEVLLNSLKNLNNDNSQGEYYLTDVIEITKKSGDKVGAIVVPYEEIMGVNSRVQLSEAEIVMRKRINHKHMVNGVTFIDCESTYIDVDVEIGNDTIIYPGCVIQGNTTIKEECTLYSNSRICNSVIGSGVIVENSVILESHVGEGTTVGPFAYIRPETKIGKSARIGDFVEIKKSTIGDNTKVSHLTYIGDAEVGSKCNFGCGTVVVNYDGQKKQKTIIGNNAFIGCNTNLISPVKVNNNTYIAAGSTITKEVPEGSLAIARSKQINKEGWLDKKGLLKK.

The tract at residues 1 to 229 (MYNCAIILAA…YEEIMGVNSR (229 aa)) is pyrophosphorylase. UDP-N-acetyl-alpha-D-glucosamine-binding positions include 8–11 (LAAG), K22, Q73, and 78–79 (GT). Position 103 (D103) interacts with Mg(2+). Residues G140, E155, N170, and N227 each contribute to the UDP-N-acetyl-alpha-D-glucosamine site. Position 227 (N227) interacts with Mg(2+). The linker stretch occupies residues 230–250 (VQLSEAEIVMRKRINHKHMVN). The tract at residues 251 to 457 (GVTFIDCEST…WLDKKGLLKK (207 aa)) is N-acetyltransferase. UDP-N-acetyl-alpha-D-glucosamine-binding residues include R332 and K350. H362 (proton acceptor) is an active-site residue. Positions 365 and 376 each coordinate UDP-N-acetyl-alpha-D-glucosamine. Residues 385–386 (NY), A422, and R439 each bind acetyl-CoA.

This sequence in the N-terminal section; belongs to the N-acetylglucosamine-1-phosphate uridyltransferase family. In the C-terminal section; belongs to the transferase hexapeptide repeat family. In terms of assembly, homotrimer. The cofactor is Mg(2+).

The protein localises to the cytoplasm. It catalyses the reaction alpha-D-glucosamine 1-phosphate + acetyl-CoA = N-acetyl-alpha-D-glucosamine 1-phosphate + CoA + H(+). The enzyme catalyses N-acetyl-alpha-D-glucosamine 1-phosphate + UTP + H(+) = UDP-N-acetyl-alpha-D-glucosamine + diphosphate. Its pathway is nucleotide-sugar biosynthesis; UDP-N-acetyl-alpha-D-glucosamine biosynthesis; N-acetyl-alpha-D-glucosamine 1-phosphate from alpha-D-glucosamine 6-phosphate (route II): step 2/2. It participates in nucleotide-sugar biosynthesis; UDP-N-acetyl-alpha-D-glucosamine biosynthesis; UDP-N-acetyl-alpha-D-glucosamine from N-acetyl-alpha-D-glucosamine 1-phosphate: step 1/1. The protein operates within bacterial outer membrane biogenesis; LPS lipid A biosynthesis. Catalyzes the last two sequential reactions in the de novo biosynthetic pathway for UDP-N-acetylglucosamine (UDP-GlcNAc). The C-terminal domain catalyzes the transfer of acetyl group from acetyl coenzyme A to glucosamine-1-phosphate (GlcN-1-P) to produce N-acetylglucosamine-1-phosphate (GlcNAc-1-P), which is converted into UDP-GlcNAc by the transfer of uridine 5-monophosphate (from uridine 5-triphosphate), a reaction catalyzed by the N-terminal domain. The sequence is that of Bifunctional protein GlmU from Clostridium botulinum (strain Kyoto / Type A2).